The sequence spans 151 residues: Ribonuclease H (151 aa).

Positions 1 to 143 (MSDVVVIHTD…ADVLATRGLQ (143 aa)) constitute an RNase H type-1 domain. Mg(2+)-binding residues include Asp-10, Glu-49, Asp-71, and Asp-135.

Belongs to the RNase H family. Monomer. Mg(2+) is required as a cofactor.

The protein localises to the cytoplasm. The catalysed reaction is Endonucleolytic cleavage to 5'-phosphomonoester.. Functionally, endonuclease that specifically degrades the RNA of RNA-DNA hybrids. The protein is Ribonuclease H of Mycolicibacterium gilvum (strain PYR-GCK) (Mycobacterium gilvum (strain PYR-GCK)).